The chain runs to 910 residues: Leucine--tRNA ligase (910 aa).

Positions 42–52 (PYPSGKLHMGH) match the 'HIGH' region motif. The 'KMSKS' region motif lies at 658–662 (TMSKS). Lys661 is a binding site for ATP.

This sequence belongs to the class-I aminoacyl-tRNA synthetase family.

It is found in the cytoplasm. The enzyme catalyses tRNA(Leu) + L-leucine + ATP = L-leucyl-tRNA(Leu) + AMP + diphosphate. In Acidovorax ebreus (strain TPSY) (Diaphorobacter sp. (strain TPSY)), this protein is Leucine--tRNA ligase.